Consider the following 763-residue polypeptide: Phosphoglycerol transferase I (763 aa).

The next 4 helical transmembrane spans lie at 1–21 (MSELLSFALFLASVLIYAWKA), 26–46 (WWFAATLTVLGLFVVLNITLF), 77–97 (ILPGIGIVLGLTAVFGALGWI), and 108–128 (FGYSLLALLLALGSVDASPAF).

Belongs to the OpgB family.

It is found in the cell inner membrane. It catalyses the reaction a phosphatidylglycerol + a membrane-derived-oligosaccharide D-glucose = a 1,2-diacyl-sn-glycerol + a membrane-derived-oligosaccharide 6-(glycerophospho)-D-glucose.. It functions in the pathway glycan metabolism; osmoregulated periplasmic glucan (OPG) biosynthesis. Functionally, transfers a phosphoglycerol residue from phosphatidylglycerol to the membrane-bound nascent glucan backbones. The polypeptide is Phosphoglycerol transferase I (Escherichia coli (strain SMS-3-5 / SECEC)).